Here is a 324-residue protein sequence, read N- to C-terminus: Adenine deaminase (324 aa).

Residues His-11, His-13, and His-189 each coordinate Zn(2+). Glu-192 functions as the Proton donor in the catalytic mechanism. Asp-270 contacts Zn(2+). Position 271 (Asp-271) interacts with substrate.

This sequence belongs to the metallo-dependent hydrolases superfamily. Adenosine and AMP deaminases family. Adenine deaminase type 2 subfamily. Zn(2+) is required as a cofactor.

The catalysed reaction is adenine + H2O + H(+) = hypoxanthine + NH4(+). In terms of biological role, catalyzes the hydrolytic deamination of adenine to hypoxanthine. Plays an important role in the purine salvage pathway and in nitrogen catabolism. In Sinorhizobium medicae (strain WSM419) (Ensifer medicae), this protein is Adenine deaminase.